Here is a 502-residue protein sequence, read N- to C-terminus: Regulator of hypoxia-inducible factor 1 (502 aa).

A run of 11 helical transmembrane segments spans residues 54 to 74, 92 to 112, 138 to 158, 188 to 208, 241 to 261, 272 to 292, 335 to 355, 367 to 387, 396 to 416, 437 to 457, and 465 to 485; these read LLAW…VFSC, LDVL…NHTG, IFGA…VLSG, LAPS…NALL, MGYL…PIFL, MALT…YCTA, GPFL…YIMV, LIVA…PNAG, TAVF…ALYF, AYLL…LQAA, and LVLP…YLFI.

Expressed in intestine, some sensory neurons in the head, body wall muscles and socket cells.

The protein resides in the endoplasmic reticulum membrane. In terms of biological role, involved in the response to variation in environmental oxygen levels by inhibiting hif-1-mediated gene transcription in a vhl-1-independent manner. Plays a role in susceptibility to killing mediated by P.aeruginosa and by pore-forming toxins produced by B.thuringiensis. Probably by preventing hif-1 transcriptional activity, regulates behavioral responses, such as locomotion speed following acute reoxygenation. Plays a role in normal egg-laying probably by regulating spermatogenesis and in body morphogenesis. This Caenorhabditis elegans protein is Regulator of hypoxia-inducible factor 1.